The following is a 912-amino-acid chain: Probable dipeptidyl-aminopeptidase B (912 aa).

Disordered stretches follow at residues 1 to 30 and 48 to 68; these read MAAE…SNSL and NGST…DYSD. At 1-92 the chain is on the cytoplasmic side; sequence MAAEKGGSSD…GGKPVQKKVK (92 aa). 2 stretches are compositionally biased toward basic and acidic residues: residues 7 to 25 and 54 to 67; these read GSSD…EYRD and TGPD…RDYS. A helical; Signal-anchor for type II membrane protein transmembrane segment spans residues 93-113; it reads IVLGFLLFLCLSGWSLAFVLF. The Vacuolar portion of the chain corresponds to 114-912; that stretch reads LFGGHESSKT…RAATWVGMSI (799 aa). Asparagine 130, asparagine 210, asparagine 346, asparagine 569, and asparagine 656 each carry an N-linked (GlcNAc...) asparagine glycan. Serine 751 acts as the Charge relay system in catalysis. A glycan (N-linked (GlcNAc...) asparagine) is linked at asparagine 810. Active-site charge relay system residues include aspartate 828 and histidine 861. Residue asparagine 897 is glycosylated (N-linked (GlcNAc...) asparagine).

It belongs to the peptidase S9B family.

It is found in the vacuole membrane. The enzyme catalyses Release of an N-terminal dipeptide, Xaa-Yaa-|-Zaa-, from a polypeptide, preferentially when Yaa is Pro, provided Zaa is neither Pro nor hydroxyproline.. Type IV dipeptidyl-peptidase which removes N-terminal dipeptides sequentially from polypeptides having unsubstituted N-termini provided that the penultimate residue is proline. The chain is Probable dipeptidyl-aminopeptidase B (DAPB) from Paracoccidioides brasiliensis (strain Pb18).